We begin with the raw amino-acid sequence, 364 residues long: Fructose-bisphosphate aldolase B (364 aa).

Alanine 2 carries the N-acetylalanine modification. N6-succinyllysine is present on lysine 13. Position 36 is a phosphoserine (serine 36). Threonine 39 bears the Phosphothreonine mark. Arginine 43 provides a ligand contact to beta-D-fructose 1,6-bisphosphate. Phosphothreonine is present on threonine 119. At lysine 121 the chain carries N6-succinyllysine. Position 132 is a phosphoserine (serine 132). Residue glutamate 188 is the Proton acceptor of the active site. The Schiff-base intermediate with dihydroxyacetone-P role is filled by lysine 230. Residues serine 272, serine 276, serine 299, and serine 301 each carry the phosphoserine modification. Residue serine 272 to glycine 274 participates in beta-D-fructose 1,6-bisphosphate binding. Arginine 304 is a beta-D-fructose 1,6-bisphosphate binding site. The residue at position 309 (serine 309) is a Phosphoserine. Lysine 317 carries the post-translational modification N6-succinyllysine.

Belongs to the class I fructose-bisphosphate aldolase family. Homotetramer. Interacts with BBS1, BBS2, BBS4 and BBS7. Forms a ternary complex with G6PD and TP53; this interaction is direct.

Its subcellular location is the cytoplasm. It is found in the cytosol. The protein resides in the cytoskeleton. The protein localises to the microtubule organizing center. It localises to the centrosome. Its subcellular location is the centriolar satellite. It carries out the reaction beta-D-fructose 1,6-bisphosphate = D-glyceraldehyde 3-phosphate + dihydroxyacetone phosphate. The catalysed reaction is beta-D-fructose 1-phosphate = D-glyceraldehyde + dihydroxyacetone phosphate. It functions in the pathway carbohydrate degradation; glycolysis; D-glyceraldehyde 3-phosphate and glycerone phosphate from D-glucose: step 4/4. It participates in carbohydrate biosynthesis; gluconeogenesis. The protein operates within carbohydrate metabolism; fructose metabolism. Its function is as follows. Catalyzes the aldol cleavage of fructose 1,6-biphosphate to form two triosephosphates dihydroxyacetone phosphate and D-glyceraldehyde 3-phosphate in glycolysis as well as the reverse stereospecific aldol addition reaction in gluconeogenesis. In fructolysis, metabolizes fructose 1-phosphate derived from the phosphorylation of dietary fructose by fructokinase into dihydroxyacetone phosphate and D-glyceraldehyde. Acts as an adapter independently of its enzymatic activity, exerts a tumor suppressor role by stabilizing the ternary complex with G6PD and TP53 to inhibit G6PD activity and keep oxidative pentose phosphate metabolism in check. The polypeptide is Fructose-bisphosphate aldolase B (ALDOB) (Bos taurus (Bovine)).